Consider the following 226-residue polypeptide: Ribosomal RNA large subunit methyltransferase E (226 aa).

Residues Gly-82, Trp-84, Asp-100, Asp-116, and Asp-140 each contribute to the S-adenosyl-L-methionine site. The Proton acceptor role is filled by Lys-180.

The protein belongs to the class I-like SAM-binding methyltransferase superfamily. RNA methyltransferase RlmE family.

It is found in the cytoplasm. It catalyses the reaction uridine(2552) in 23S rRNA + S-adenosyl-L-methionine = 2'-O-methyluridine(2552) in 23S rRNA + S-adenosyl-L-homocysteine + H(+). Specifically methylates the uridine in position 2552 of 23S rRNA at the 2'-O position of the ribose in the fully assembled 50S ribosomal subunit. The polypeptide is Ribosomal RNA large subunit methyltransferase E (Caulobacter sp. (strain K31)).